A 140-amino-acid polypeptide reads, in one-letter code: Protein NrdI (140 aa).

Belongs to the NrdI family.

Its function is as follows. Probably involved in ribonucleotide reductase function. This Photorhabdus laumondii subsp. laumondii (strain DSM 15139 / CIP 105565 / TT01) (Photorhabdus luminescens subsp. laumondii) protein is Protein NrdI.